The following is a 389-amino-acid chain: Protein Wnt-10b (389 aa).

A signal peptide spans 1–28 (MLEEPRPRPPPSGLAGLLFLALCSRALS). Thr-46 is subject to Phosphothreonine. Disulfide bonds link Cys-83-Cys-94, Cys-136-Cys-144, Cys-146-Cys-199, Cys-247-Cys-261, Cys-249-Cys-256, Cys-318-Cys-349, Cys-334-Cys-344, Cys-348-Cys-388, Cys-364-Cys-379, Cys-366-Cys-376, and Cys-371-Cys-372. Asn-93 carries an N-linked (GlcNAc...) asparagine glycan. Residues 171 to 197 (KSFPHSLPSPGPGSSPSPGPQDTWEWG) are disordered. Residues 177–189 (LPSPGPGSSPSPG) are compositionally biased toward pro residues. Ser-253 is lipidated: O-palmitoleoyl serine; by PORCN. An N-linked (GlcNAc...) asparagine glycan is attached at Asn-335.

The protein belongs to the Wnt family. As to quaternary structure, forms a soluble 1:1 complex with AFM; this prevents oligomerization and is required for prolonged biological activity. The complex with AFM may represent the physiological form in body fluids. In terms of processing, palmitoleoylation is required for efficient binding to frizzled receptors. Depalmitoleoylation leads to Wnt signaling pathway inhibition. As to expression, detected in most adult tissues. Highest levels were found in heart and skeletal muscle. Low levels are found in brain.

The protein resides in the secreted. It is found in the extracellular space. Its subcellular location is the extracellular matrix. Member of the Wnt ligand gene family that encodes for secreted proteins, which activate the Wnt signaling cascade. Specifically activates canonical Wnt/beta-catenin signaling and thus triggers beta-catenin/LEF/TCF-mediated transcriptional programs. Involved in signaling networks controlling stemness, pluripotency and cell fate decisions. Acts in the immune system, mammary gland, adipose tissue, bone and skin. The polypeptide is Protein Wnt-10b (WNT10B) (Homo sapiens (Human)).